Reading from the N-terminus, the 291-residue chain is ATP synthase subunit a (291 aa).

Helical transmembrane passes span 50-70 (LDSM…FWIV), 108-128 (IAPL…MDLI), 129-149 (PVDW…GMDP), 161-181 (DPNI…FYSI), 203-223 (PVAK…TFLA), 241-261 (LIFI…SVPW), and 262-282 (AIFH…LTIV).

It belongs to the ATPase A chain family. As to quaternary structure, F-type ATPases have 2 components, CF(1) - the catalytic core - and CF(0) - the membrane proton channel. CF(1) has five subunits: alpha(3), beta(3), gamma(1), delta(1), epsilon(1). CF(0) has three main subunits: a(1), b(2) and c(9-12). The alpha and beta chains form an alternating ring which encloses part of the gamma chain. CF(1) is attached to CF(0) by a central stalk formed by the gamma and epsilon chains, while a peripheral stalk is formed by the delta and b chains.

Its subcellular location is the cell inner membrane. Key component of the proton channel; it plays a direct role in the translocation of protons across the membrane. This chain is ATP synthase subunit a, found in Acinetobacter baumannii (strain AB307-0294).